The primary structure comprises 3073 residues: Adhesion G-protein coupled receptor G4 (3073 aa).

Residues 1–25 (MRKHILHQRLCGLILVSSFIFLTDS) form the signal peptide. The Extracellular segment spans residues 26 to 2691 (LSLKGKRLDF…RSTVDAVNER (2666 aa)). A Pentraxin (PTX) domain is found at 29–228 (KGKRLDFYGE…SPTVDRRLRC (200 aa)). Cystine bridges form between cysteine 58–cysteine 123 and cysteine 200–cysteine 228. Residue asparagine 233 is glycosylated (N-linked (GlcNAc...) asparagine). Residues 253–272 (SQTTGLNPHKTSHSSTLLPE) are disordered. N-linked (GlcNAc...) asparagine glycosylation occurs at asparagine 662. Composition is skewed to polar residues over residues 671 to 696 (GNAT…ESKV) and 929 to 951 (GNSA…SSST). Disordered stretches follow at residues 671–697 (GNAT…SKVT) and 924–951 (SEKS…SSST). N-linked (GlcNAc...) asparagine glycosylation is found at asparagine 1141, asparagine 1304, and asparagine 1495. 3 disordered regions span residues 1565-1595 (FTSS…AGPT), 1741-1760 (TLTN…STPT), and 1945-1972 (ITLS…SDSR). Over residues 1945–1954 (ITLSSNPSVN) the composition is skewed to polar residues. Residues 1955 to 1972 (SRATSPTWSSSSLPSDSR) show a composition bias toward low complexity. The 150-residue stretch at 2535–2684 (SSEEVIAPQI…GVLMDLSRST (150 aa)) folds into the GAIN-B domain. Cystine bridges form between cysteine 2635–cysteine 2666 and cysteine 2654–cysteine 2668. The tract at residues 2635-2684 (CAFWDFDTNNGLGGWNPSGCKLKESNINYTICQCNHLTHFGVLMDLSRST) is GPS. The segment at 2673-2684 (HFGVLMDLSRST) is stachel. Residues 2692–2712 (ILVIITYTGCGISSIFLGIAM) traverse the membrane as a helical segment. Residues 2713–2728 (VTYIAFHKLRKDYPSK) are Cytoplasmic-facing. A helical transmembrane segment spans residues 2729 to 2749 (ILINLCTALLMLNLAFLVNSW). The Extracellular segment spans residues 2750-2755 (LTSFQK). Residues 2756 to 2776 (VGLCITAAVALHYFLLVSLTW) form a helical membrane-spanning segment. A disulfide bond links cysteine 2759 and cysteine 2836. At 2777 to 2798 (MGLEAVHMYFALVKVFNTYIPN) the chain is on the cytoplasmic side. Residues 2799 to 2819 (YILKFCLAGWGIPAITVAIIL) form a helical membrane-spanning segment. At 2820–2842 (SVRKDLYGTLSPTTPFCWIKDDH) the chain is on the extracellular side. Residues 2843–2863 (IFYISVVAYFCLIFLMNLSMF) traverse the membrane as a helical segment. Residues 2864-2892 (CTVLVQLTSVKSQSQKTRKKMILNDLKGT) are Cytoplasmic-facing. A helical membrane pass occupies residues 2893-2913 (ISLTFLLGLTWGFAFFAWGPV). Residue arginine 2914 is a topological domain, extracellular. Residues 2915 to 2935 (IFFLYLFAICNTLQGFLIFVF) form a helical membrane-spanning segment. Residues 2936–3073 (YCVMKESVRE…SSGLGEMFNL (138 aa)) lie on the Cytoplasmic side of the membrane.

Belongs to the G-protein coupled receptor 2 family. Adhesion G-protein coupled receptor (ADGR) subfamily. In terms of assembly, homodimer; homodimerizes via its Pentraxin domain in a calcium-independent manner. Heterodimer of 2 chains generated by proteolytic processing; the large extracellular N-terminal fragment and the membrane-bound C-terminal fragment predominantly remain associated and non-covalently linked. Post-translationally, autoproteolytically processed at the GPS region of the GAIN-B domain; this cleavage modulates receptor activity.

It localises to the membrane. Forms a heterodimer of 2 chains generated by proteolytic processing that remain associated through non-covalent interactions mediated by the GAIN-B domain. In the inactivated receptor, the Stachel sequence (also named stalk) is embedded in the GAIN-B domain, where it adopts a beta-strand conformation. On activation, the Stachel moves into the 7 transmembrane region and adopts a twisted hook-shaped configuration that forms contacts within the receptor, leading to coupling of a G-alpha protein, which activates signaling. The cleaved GAIN-B and N-terminal domains can then dissociate from the rest of the receptor. Its function is as follows. Orphan adhesion G-protein coupled receptor (aGPCR). Ligand binding causes a conformation change that triggers signaling via guanine nucleotide-binding proteins (G proteins) and modulates the activity of downstream effectors, such as adenylate cyclase. ADGRG4 is coupled to G(s) G proteins and mediates activation of adenylate cyclase activity. May be act as sensor of mechanical forces. This chain is Adhesion G-protein coupled receptor G4, found in Mus musculus (Mouse).